The chain runs to 996 residues: Receptor-like protein kinase HSL1 (996 aa).

The signal sequence occupies residues 1–15 (MYLLFLFLLFPTVFS). Topologically, residues 16-618 (LNQDGFILQQ…ENEAKKRGYV (603 aa)) are extracellular. LRR repeat units lie at residues 59 to 83 (FSSV…ICRL), 84 to 107 (SNLA…IAAC), 109 to 131 (SLQT…LADI), 133 to 154 (TLVH…SFGK), 155 to 178 (FENL…FLGN), 179 to 203 (ISTL…EFGN), 205 to 228 (TNLE…LGQL), 229 to 252 (SKLV…LGGL), 253 to 276 (TNVV…LGNL), 278 to 299 (SLRL…ELCR), 300 to 323 (VPLE…IALS), 325 to 347 (NLYE…LGLN), 348 to 371 (SPLR…LCAK), 373 to 395 (ELEE…LADC), 396 to 419 (RSLT…FWGL), 421 to 443 (HVNL…IGGA), 444 to 467 (SNLS…IGSL), 468 to 491 (DNLN…LMSL), 493 to 515 (ELGT…IKSW), 516 to 539 (KKLN…IGSL), 541 to 562 (VLNY…SLQS), and 563 to 586 (LKLN…LAKD). Asn93 and Asn97 each carry an N-linked (GlcNAc...) asparagine glycan. 4 N-linked (GlcNAc...) asparagine glycosylation sites follow: Asn143, Asn178, Asn186, and Asn203. N-linked (GlcNAc...) asparagine glycosylation occurs at Asn262. N-linked (GlcNAc...) asparagine glycosylation is found at Asn429 and Asn445. Asn569 is a glycosylation site (N-linked (GlcNAc...) asparagine). Residues 619–639 (WLLRSIFVLAAMVLLAGVAWF) traverse the membrane as a helical segment. The Cytoplasmic portion of the chain corresponds to 640–996 (YFKYRTFKKA…EDTSDQGSIA (357 aa)). In terms of domain architecture, Protein kinase spans 676–962 (LDEDNVIGAG…RRVVKMLQEI (287 aa)). ATP-binding positions include 682-690 (IGAGASGKV) and Lys704. 2 positions are modified to phosphotyrosine: Tyr764 and Tyr802. Asp815 acts as the Proton acceptor in catalysis. The residue at position 851 (Ser851) is a Phosphoserine. Residues Tyr859 and Tyr866 each carry the phosphotyrosine modification. Phosphothreonine is present on Thr867. Positions 967–996 (EDSLHKIRDDKDGKLTPYYNEDTSDQGSIA) are disordered. Basic and acidic residues predominate over residues 968–980 (DSLHKIRDDKDGK).

The protein belongs to the protein kinase superfamily. Ser/Thr protein kinase family.

Its subcellular location is the cell membrane. The catalysed reaction is L-seryl-[protein] + ATP = O-phospho-L-seryl-[protein] + ADP + H(+). The enzyme catalyses L-threonyl-[protein] + ATP = O-phospho-L-threonyl-[protein] + ADP + H(+). In Arabidopsis thaliana (Mouse-ear cress), this protein is Receptor-like protein kinase HSL1 (HSL1).